The following is a 234-amino-acid chain: 1-(5-phosphoribosyl)-5-[(5-phosphoribosylamino)methylideneamino] imidazole-4-carboxamide isomerase (234 aa).

The Proton acceptor role is filled by Asp-9. Asp-131 acts as the Proton donor in catalysis.

It belongs to the HisA/HisF family.

Its subcellular location is the cytoplasm. It catalyses the reaction 1-(5-phospho-beta-D-ribosyl)-5-[(5-phospho-beta-D-ribosylamino)methylideneamino]imidazole-4-carboxamide = 5-[(5-phospho-1-deoxy-D-ribulos-1-ylimino)methylamino]-1-(5-phospho-beta-D-ribosyl)imidazole-4-carboxamide. The protein operates within amino-acid biosynthesis; L-histidine biosynthesis; L-histidine from 5-phospho-alpha-D-ribose 1-diphosphate: step 4/9. The polypeptide is 1-(5-phosphoribosyl)-5-[(5-phosphoribosylamino)methylideneamino] imidazole-4-carboxamide isomerase (Staphylococcus aureus (strain NCTC 8325 / PS 47)).